The chain runs to 300 residues: Protease HtpX (300 aa).

Transmembrane regions (helical) follow at residues 4–24 and 40–60; these read ILLFLATNLAVVLVASITLRL and SLLIFCFVIGMAGSLVSLFIS. Zn(2+) is bound at residue H145. Residue E146 is part of the active site. Zn(2+) is bound at residue H149. Helical transmembrane passes span 153–173 and 193–213; these read GDMVTLALIQGVLNTFVMFFA and LGFFGYMAVVIVAEIVFGLVA. A Zn(2+)-binding site is contributed by E225.

This sequence belongs to the peptidase M48B family. Zn(2+) is required as a cofactor.

The protein resides in the cell inner membrane. This chain is Protease HtpX, found in Chromohalobacter salexigens (strain ATCC BAA-138 / DSM 3043 / CIP 106854 / NCIMB 13768 / 1H11).